The following is a 962-amino-acid chain: Protease 3 (962 aa).

The first 23 residues, 1-23 (MPRSTWFKALLLLVALWAPLSQA), serve as a signal peptide directing secretion. Residue His88 coordinates Zn(2+). Catalysis depends on Glu91, which acts as the Proton acceptor. Residues His92 and Glu169 each coordinate Zn(2+).

It belongs to the peptidase M16 family. Monomer. Zn(2+) serves as cofactor.

Its subcellular location is the periplasm. The catalysed reaction is Preferential cleavage of 16-Tyr-|-Leu-17 and 25-Phe-|-Tyr-26 bonds of oxidized insulin B chain. Also acts on other substrates of Mw less than 7 kDa such as insulin and glucagon.. In terms of biological role, endopeptidase that degrades small peptides of less than 7 kDa, such as glucagon and insulin. The polypeptide is Protease 3 (ptrA) (Escherichia coli O157:H7).